Here is a 217-residue protein sequence, read N- to C-terminus: Large ribosomal subunit protein uL1 (217 aa).

Belongs to the universal ribosomal protein uL1 family. In terms of assembly, part of the 50S ribosomal subunit.

Its function is as follows. Binds directly to 23S rRNA. The L1 stalk is quite mobile in the ribosome, and is involved in E site tRNA release. Protein L1 is also a translational repressor protein, it controls the translation of the L11 operon by binding to its mRNA. The protein is Large ribosomal subunit protein uL1 of Wolbachia pipientis wMel.